Consider the following 353-residue polypeptide: UPF0283 membrane protein YcjF (353 aa).

3 consecutive transmembrane segments (helical) span residues 70–90 (MVMGGLALFGASVVGQGVQWT), 100–120 (VALGGCAAGALIIGAGVGSVV), and 213–233 (ESTLMIAVSPLALVDMAFIAW).

This sequence belongs to the UPF0283 family.

The protein localises to the cell inner membrane. In Shigella boydii serotype 4 (strain Sb227), this protein is UPF0283 membrane protein YcjF.